Here is a 1038-residue protein sequence, read N- to C-terminus: Pro-apoptotic serine protease nma111 (1038 aa).

The tract at residues 1–47 (MDLNGDSNAKRKRSSISAAAERPAKHLRPENSSLTPGDTTPANGTVY) is disordered. Residues 30 to 43 (ENSSLTPGDTTPAN) are compositionally biased toward polar residues. Positions 82 to 275 (VVSIHFCQTC…DRPLRALNCI (194 aa)) are serine protease. Active-site charge relay system residues include His-120, Asp-151, and Ser-233. 2 consecutive PDZ domains span residues 289-374 (QWIL…LLVQ) and 877-958 (VFCG…VTFD).

Belongs to the peptidase S1C family.

It is found in the nucleus. Its function is as follows. Nuclear serine protease which mediates apoptosis. The polypeptide is Pro-apoptotic serine protease nma111 (nma111) (Aspergillus terreus (strain NIH 2624 / FGSC A1156)).